The chain runs to 251 residues: ATP synthase subunit a, chloroplastic (251 aa).

Transmembrane regions (helical) follow at residues 3 to 23 (IVLLYYFVNMFISGIFQIANV), 38 to 58 (IHGQVLINSWIVILIIGFLSI), 99 to 119 (VPYIGTMFLFIFVSNWSGALI), 138 to 158 (INTTAGLAILTSLAYFYAGLN), 203 to 223 (LVVAVLVSLVPLIVPVPLIFL), and 224 to 244 (GLFTSGIQALIFATLSGSYIG).

The protein belongs to the ATPase A chain family. F-type ATPases have 2 components, CF(1) - the catalytic core - and CF(0) - the membrane proton channel. CF(1) has five subunits: alpha(3), beta(3), gamma(1), delta(1), epsilon(1). CF(0) has four main subunits: a, b, b' and c.

The protein resides in the plastid. The protein localises to the chloroplast thylakoid membrane. In terms of biological role, key component of the proton channel; it plays a direct role in the translocation of protons across the membrane. The protein is ATP synthase subunit a, chloroplastic of Euglena gracilis.